The primary structure comprises 874 residues: Alanine--tRNA ligase (874 aa).

The Zn(2+) site is built by His564, His568, Cys665, and His669.

This sequence belongs to the class-II aminoacyl-tRNA synthetase family. The cofactor is Zn(2+).

It is found in the cytoplasm. It carries out the reaction tRNA(Ala) + L-alanine + ATP = L-alanyl-tRNA(Ala) + AMP + diphosphate. Catalyzes the attachment of alanine to tRNA(Ala) in a two-step reaction: alanine is first activated by ATP to form Ala-AMP and then transferred to the acceptor end of tRNA(Ala). Also edits incorrectly charged Ser-tRNA(Ala) and Gly-tRNA(Ala) via its editing domain. This Cupriavidus necator (strain ATCC 17699 / DSM 428 / KCTC 22496 / NCIMB 10442 / H16 / Stanier 337) (Ralstonia eutropha) protein is Alanine--tRNA ligase.